A 405-amino-acid polypeptide reads, in one-letter code: MQIFLVLALCGLAAAVPSEDRKLSDKATTLADRSTTLAFNLYHAMAKDKNMENILLSPVVVASSLGLVSLGGKATTASQAKAVLSADKLNDDYVHSGLSELLNEVSNSTARNVTWKIGNRLYGPASINFADDFVKNSKKHYNYEHSKINFRDKRSALKSINEWAAQTTDGKLPEVTKDVEKTDGALIVNAMFFKPHWDEKFHHKMVDNRGFMVTRSYTVGVPMMHRTGLYNYYDDEAEKLQVVEMPLAHKLSSMIFIMPNHVEPLERVEKLLNREQLKTWASKMKKRSVAISLPKVVLEVSHDLQKHLADLGLTEAIDKTKADLSKISGKKDLYLSNVFHAAALEWDTDGNPYDADIYGREEMRNPKLFYADHPFIFMIKDSKTNSILFIGRLVRPKGDKMRDEL.

An N-terminal signal peptide occupies residues Met-1–Ala-15. Asn-107 and Asn-112 each carry an N-linked (GlcNAc...) asparagine glycan. Residues Arg-402–Leu-405 carry the Prevents secretion from ER motif.

The protein belongs to the serpin family.

The protein localises to the endoplasmic reticulum lumen. Its function is as follows. Binds specifically to collagen. Could be involved as a chaperone in the biosynthetic pathway of collagen. In Gallus gallus (Chicken), this protein is Serpin H1 (SERPINH1).